The sequence spans 91 residues: Large ribosomal subunit protein bL31B (91 aa).

This sequence belongs to the bacterial ribosomal protein bL31 family. Type B subfamily. As to quaternary structure, part of the 50S ribosomal subunit.

This chain is Large ribosomal subunit protein bL31B, found in Mycolicibacterium vanbaalenii (strain DSM 7251 / JCM 13017 / BCRC 16820 / KCTC 9966 / NRRL B-24157 / PYR-1) (Mycobacterium vanbaalenii).